A 155-amino-acid polypeptide reads, in one-letter code: 6,7-dimethyl-8-ribityllumazine synthase (155 aa).

5-amino-6-(D-ribitylamino)uracil contacts are provided by residues phenylalanine 23, 57 to 59 (AFE), and 81 to 83 (AVI). Residue 86–87 (AT) participates in (2S)-2-hydroxy-3-oxobutyl phosphate binding. Histidine 89 (proton donor) is an active-site residue. Position 114 (phenylalanine 114) interacts with 5-amino-6-(D-ribitylamino)uracil. Residue arginine 128 coordinates (2S)-2-hydroxy-3-oxobutyl phosphate.

Belongs to the DMRL synthase family.

It carries out the reaction (2S)-2-hydroxy-3-oxobutyl phosphate + 5-amino-6-(D-ribitylamino)uracil = 6,7-dimethyl-8-(1-D-ribityl)lumazine + phosphate + 2 H2O + H(+). The protein operates within cofactor biosynthesis; riboflavin biosynthesis; riboflavin from 2-hydroxy-3-oxobutyl phosphate and 5-amino-6-(D-ribitylamino)uracil: step 1/2. In terms of biological role, catalyzes the formation of 6,7-dimethyl-8-ribityllumazine by condensation of 5-amino-6-(D-ribitylamino)uracil with 3,4-dihydroxy-2-butanone 4-phosphate. This is the penultimate step in the biosynthesis of riboflavin. In Geotalea daltonii (strain DSM 22248 / JCM 15807 / FRC-32) (Geobacter daltonii), this protein is 6,7-dimethyl-8-ribityllumazine synthase.